The chain runs to 536 residues: Thiamine transport system permease protein ThiP (536 aa).

Transmembrane regions (helical) follow at residues Trp-12–Leu-32, Phe-58–Ala-78, Leu-95–Tyr-115, Phe-134–Ala-154, Val-199–Gly-219, Pro-240–Leu-260, Val-293–Gly-313, Ser-334–Trp-354, Ser-374–Leu-394, Ala-404–Leu-424, Ala-463–Phe-483, and Asp-506–Glu-526. The region spanning Val-56–Ser-261 is the ABC transmembrane type-1 1 domain. One can recognise an ABC transmembrane type-1 2 domain in the interval Leu-331–Ile-525.

The protein belongs to the binding-protein-dependent transport system permease family. CysTW subfamily. The complex is composed of two ATP-binding proteins (ThiQ), two transmembrane proteins (ThiP) and a solute-binding protein (ThiB).

It localises to the cell inner membrane. Transport is inhibited by the sulfhydryl-specific modifier N-ethylmaleimide. Part of the ABC transporter complex ThiBPQ involved in thiamine import. Probably responsible for the translocation of the substrate across the membrane. The polypeptide is Thiamine transport system permease protein ThiP (thiP) (Escherichia coli (strain K12)).